Reading from the N-terminus, the 628-residue chain is Putative lipase ATG15 (628 aa).

Residues 1–32 (MLAAEKRRLLHKTRPVSASEKPGSIYPQRALY) are Cytoplasmic-facing. Residues 33 to 53 (LLVCFSIATISLGYLHFIGAI) traverse the membrane as a helical; Signal-anchor for type II membrane protein segment. Residues 54 to 628 (DIGRFGISSV…GYDGDVDDDQ (575 aa)) lie on the Lumenal side of the membrane. N-linked (GlcNAc...) asparagine glycosylation is found at Asn-261, Asn-299, and Asn-383. The Charge relay system role is filled by Ser-401. Asn-518 carries N-linked (GlcNAc...) asparagine glycosylation. The disordered stretch occupies residues 540-605 (HDDDVPDEPE…ISEPSESPKK (66 aa)). A compositionally biased stretch (low complexity) spans 562–586 (PSSSTSDGKNNRISSTATTTISPTS). A compositionally biased stretch (polar residues) spans 591–600 (PTSSDISEPS).

This sequence belongs to the AB hydrolase superfamily. Lipase family. Binds to both phosphatidylinositol (PI) and phosphatidylinositol 3,5-bisphosphate (PIP2).

It is found in the endosome. Its subcellular location is the multivesicular body membrane. It localises to the prevacuolar compartment membrane. It catalyses the reaction a triacylglycerol + H2O = a diacylglycerol + a fatty acid + H(+). In terms of biological role, lipase which is essential for lysis of subvacuolar cytoplasm to vacuole targeted bodies and intravacuolar autophagic bodies. Involved in the lysis of intravacuolar multivesicular body (MVB) vesicles. The intravacuolar membrane disintegration by ATG15 is critical to life span extension. The chain is Putative lipase ATG15 (ATG15) from Scheffersomyces stipitis (strain ATCC 58785 / CBS 6054 / NBRC 10063 / NRRL Y-11545) (Yeast).